The following is a 201-amino-acid chain: Recombination protein RecR (201 aa).

The segment at 57–72 (CRYCRNLSDAEVCLLC) adopts a C4-type zinc-finger fold. The Toprim domain maps to 80-175 (QQICVVETPA…QATRLAYGVP (96 aa)).

Belongs to the RecR family.

Its function is as follows. May play a role in DNA repair. It seems to be involved in an RecBC-independent recombinational process of DNA repair. It may act with RecF and RecO. This is Recombination protein RecR from Dichelobacter nodosus (strain VCS1703A).